Here is a 260-residue protein sequence, read N- to C-terminus: Uroplakin-1b (260 aa).

At 2-15 the chain is on the cytoplasmic side; sequence AKDDSTVRCFQGLL. Residues 16–36 form a helical membrane-spanning segment; sequence IFGNVIIGMCSIALMAECIFF. The Extracellular segment spans residues 37 to 60; it reads VSDQNSLYPLLEATNNDDIYAAAW. A helical transmembrane segment spans residues 61–81; sequence IGMFVGICLFCLSVLGIVGIM. Residues 82-86 are Cytoplasmic-facing; that stretch reads KSNRK. The helical transmembrane segment at 87-107 threads the bilayer; that stretch reads ILLVYFILMFIVYAFEVASCI. Topologically, residues 108–229 are extracellular; sequence TAATQRDFFT…ELISGPMNRH (122 aa). Residues 230 to 250 traverse the membrane as a helical segment; the sequence is AWGVAWFGFAILCWTFWVLLG. The Cytoplasmic segment spans residues 251 to 260; that stretch reads TMFYWSRIDY.

This sequence belongs to the tetraspanin (TM4SF) family. As to quaternary structure, heterodimer with uroplakin-3A (UPK3A) or uroplakin-3B (UPK3B). In terms of processing, N-glycosylated with high-mannose oligosaccharides. As to expression, bladder epithelium.

It is found in the membrane. Component of the asymmetric unit membrane (AUM); a highly specialized biomembrane elaborated by terminally differentiated urothelial cells. May play an important role in normal bladder epithelial physiology, possibly in regulating membrane permeability of superficial umbrella cells or in stabilizing the apical membrane through AUM/cytoskeletal interactions. This chain is Uroplakin-1b (UPK1B), found in Bos taurus (Bovine).